We begin with the raw amino-acid sequence, 278 residues long: Formamidopyrimidine-DNA glycosylase (278 aa).

The Schiff-base intermediate with DNA role is filled by Pro-2. The active-site Proton donor is the Glu-3. Lys-60 acts as the Proton donor; for beta-elimination activity in catalysis. DNA is bound by residues His-95 and Arg-114. The FPG-type zinc-finger motif lies at Trp-244–Gly-278. Residue Arg-268 is the Proton donor; for delta-elimination activity of the active site.

Belongs to the FPG family. Monomer. It depends on Zn(2+) as a cofactor.

The catalysed reaction is Hydrolysis of DNA containing ring-opened 7-methylguanine residues, releasing 2,6-diamino-4-hydroxy-5-(N-methyl)formamidopyrimidine.. The enzyme catalyses 2'-deoxyribonucleotide-(2'-deoxyribose 5'-phosphate)-2'-deoxyribonucleotide-DNA = a 3'-end 2'-deoxyribonucleotide-(2,3-dehydro-2,3-deoxyribose 5'-phosphate)-DNA + a 5'-end 5'-phospho-2'-deoxyribonucleoside-DNA + H(+). Its function is as follows. Involved in base excision repair of DNA damaged by oxidation or by mutagenic agents. Acts as a DNA glycosylase that recognizes and removes damaged bases. Has a preference for oxidized purines, such as 7,8-dihydro-8-oxoguanine (8-oxoG). Has AP (apurinic/apyrimidinic) lyase activity and introduces nicks in the DNA strand. Cleaves the DNA backbone by beta-delta elimination to generate a single-strand break at the site of the removed base with both 3'- and 5'-phosphates. The protein is Formamidopyrimidine-DNA glycosylase of Parasynechococcus marenigrum (strain WH8102).